Reading from the N-terminus, the 424-residue chain is Glutamyl-tRNA reductase (424 aa).

Substrate-binding positions include 49–52, Ser107, 112–114, and Gln118; these read TCNR and EPQ. Residue Cys50 is the Nucleophile of the active site. Residue 187–192 participates in NADP(+) binding; it reads GAGETI.

It belongs to the glutamyl-tRNA reductase family. In terms of assembly, homodimer.

The enzyme catalyses (S)-4-amino-5-oxopentanoate + tRNA(Glu) + NADP(+) = L-glutamyl-tRNA(Glu) + NADPH + H(+). The protein operates within porphyrin-containing compound metabolism; protoporphyrin-IX biosynthesis; 5-aminolevulinate from L-glutamyl-tRNA(Glu): step 1/2. In terms of biological role, catalyzes the NADPH-dependent reduction of glutamyl-tRNA(Glu) to glutamate 1-semialdehyde (GSA). This chain is Glutamyl-tRNA reductase, found in Chromohalobacter salexigens (strain ATCC BAA-138 / DSM 3043 / CIP 106854 / NCIMB 13768 / 1H11).